Here is a 937-residue protein sequence, read N- to C-terminus: Diacylglycerol kinase theta (937 aa).

A disordered region spans residues 1-48 (MATAAESGARTWPGSGSPRLGSPAGSPVLGISGRARPGSGPERTGRAI). Residues Ser22 and Ser26 each carry the phosphoserine modification. 3 consecutive Phorbol-ester/DAG-type zinc fingers follow at residues 54–102 (GHSF…KTPC), 115–162 (AHCF…CSDC), and 177–228 (HHHW…TPEC). The disordered stretch occupies residues 359 to 378 (GKAGTTEEETSKDSGPGDSV). In terms of domain architecture, Ras-associating spans 390–489 (TQEILKIYPD…TRFYVAEARA (100 aa)). Short sequence motifs (LXXLL motif) lie at residues 550–554 (LYMLA) and 569–573 (LPDVL). The DAGKc domain occupies 579–716 (PDCCPLLVFV…MDRWTILLDA (138 aa)). The interval 911–937 (AKQKPRKAGAIRDTRVDTLPAPEGNPL) is disordered.

This sequence belongs to the eukaryotic diacylglycerol kinase family. As to quaternary structure, interacts with RHOA (constitutively activated, GTP-bound); the interaction inhibits DGKQ. Interacts with PRKCE. Interacts with PRKCH. Interacts with PLCB1. Interacts with NR5A1; the interaction requires both LXXLL motifs in DGKQ and is required for full phosphatidic acid-mediated activation of NR5A1. Phosphorylated by PRKCE and PRKCH in vitro. In terms of tissue distribution, widely expressed with higher expression in the brain and, to a lesser extent, in the small intestine, duodenum, and liver. In brain, expressed in gray matter. Expression is most intense in the cerebellar cortex and hippocampus, while moderate expression is seen in the olfactory bulb neuronal layers and brain stem nuclei. In the cerebellar cortex, equally expressed in both the Purkinje cell somata and the granule cells.

The protein resides in the cytoplasm. It is found in the cytosol. Its subcellular location is the cell membrane. The protein localises to the synapse. It localises to the cytoskeleton. The protein resides in the nucleus. It is found in the nucleus speckle. Its subcellular location is the nucleus matrix. It catalyses the reaction a 1,2-diacyl-sn-glycerol + ATP = a 1,2-diacyl-sn-glycero-3-phosphate + ADP + H(+). The enzyme catalyses a 1-O-alkyl-sn-glycerol + ATP = a 1-O-alkyl-sn-glycero-3-phosphate + ADP + H(+). It carries out the reaction 1-O-alkyl-2-acyl-sn-glycerol + ATP = 1-O-alkyl-2-acyl-sn-glycero-3-phosphate + ADP + H(+). The catalysed reaction is 1,2-di-(9Z-octadecenoyl)-sn-glycerol + ATP = 1,2-di-(9Z-octadecenoyl)-sn-glycero-3-phosphate + ADP + H(+). It catalyses the reaction 1-O-hexadecyl-sn-glycerol + ATP = 1-O-hexadecyl-sn-glycero-3-phosphate + ADP + H(+). The enzyme catalyses 1-O-hexadecyl-2-acetyl-sn-glycerol + ATP = 1-O-hexadecyl-2-acetyl-sn-glycero-3-phosphate + ADP + H(+). It carries out the reaction 1-octadecanoyl-2-(5Z,8Z,11Z,14Z-eicosatetraenoyl)-sn-glycerol + ATP = 1-octadecanoyl-2-(5Z,8Z,11Z,14Z-eicosatetraenoyl)-sn-glycero-3-phosphate + ADP + H(+). Its pathway is lipid metabolism; glycerolipid metabolism. Its activity is regulated as follows. Activated by phosphatidylserine. Functionally, diacylglycerol kinase that converts diacylglycerol/DAG into phosphatidic acid/phosphatidate/PA and regulates the respective levels of these two bioactive lipids. Thereby, acts as a central switch between the signaling pathways activated by these second messengers with different cellular targets and opposite effects in numerous biological processes. Within the adrenocorticotropic hormone signaling pathway, produces phosphatidic acid which in turn activates NR5A1 and subsequent steroidogenic gene transcription. Also functions downstream of the nerve growth factor signaling pathway being specifically activated in the nucleus by the growth factor. Through its diacylglycerol activity also regulates synaptic vesicle endocytosis. The sequence is that of Diacylglycerol kinase theta from Rattus norvegicus (Rat).